The chain runs to 98 residues: Integration host factor subunit alpha (98 aa).

The protein belongs to the bacterial histone-like protein family. In terms of assembly, heterodimer of an alpha and a beta chain.

Functionally, this protein is one of the two subunits of integration host factor, a specific DNA-binding protein that functions in genetic recombination as well as in transcriptional and translational control. The chain is Integration host factor subunit alpha from Idiomarina loihiensis (strain ATCC BAA-735 / DSM 15497 / L2-TR).